The sequence spans 216 residues: Phosphoribosylformylglycinamidine synthase subunit PurQ (216 aa).

Positions 2-216 constitute a Glutamine amidotransferase type-1 domain; it reads SIGVIVFPGS…GRRMLEALLG (215 aa). The Nucleophile role is filled by cysteine 86. Active-site residues include histidine 193 and glutamate 195.

Part of the FGAM synthase complex composed of 1 PurL, 1 PurQ and 2 PurS subunits.

It localises to the cytoplasm. The catalysed reaction is N(2)-formyl-N(1)-(5-phospho-beta-D-ribosyl)glycinamide + L-glutamine + ATP + H2O = 2-formamido-N(1)-(5-O-phospho-beta-D-ribosyl)acetamidine + L-glutamate + ADP + phosphate + H(+). The enzyme catalyses L-glutamine + H2O = L-glutamate + NH4(+). It functions in the pathway purine metabolism; IMP biosynthesis via de novo pathway; 5-amino-1-(5-phospho-D-ribosyl)imidazole from N(2)-formyl-N(1)-(5-phospho-D-ribosyl)glycinamide: step 1/2. In terms of biological role, part of the phosphoribosylformylglycinamidine synthase complex involved in the purines biosynthetic pathway. Catalyzes the ATP-dependent conversion of formylglycinamide ribonucleotide (FGAR) and glutamine to yield formylglycinamidine ribonucleotide (FGAM) and glutamate. The FGAM synthase complex is composed of three subunits. PurQ produces an ammonia molecule by converting glutamine to glutamate. PurL transfers the ammonia molecule to FGAR to form FGAM in an ATP-dependent manner. PurS interacts with PurQ and PurL and is thought to assist in the transfer of the ammonia molecule from PurQ to PurL. The protein is Phosphoribosylformylglycinamidine synthase subunit PurQ of Synechococcus sp. (strain CC9605).